The following is a 193-amino-acid chain: NADH-quinone oxidoreductase subunit B (193 aa).

Cysteine 72, cysteine 73, cysteine 137, and cysteine 167 together coordinate [4Fe-4S] cluster.

Belongs to the complex I 20 kDa subunit family. As to quaternary structure, NDH-1 is composed of 14 different subunits. Subunits NuoB, C, D, E, F, and G constitute the peripheral sector of the complex. It depends on [4Fe-4S] cluster as a cofactor.

It is found in the cell inner membrane. The enzyme catalyses a quinone + NADH + 5 H(+)(in) = a quinol + NAD(+) + 4 H(+)(out). Its function is as follows. NDH-1 shuttles electrons from NADH, via FMN and iron-sulfur (Fe-S) centers, to quinones in the respiratory chain. The immediate electron acceptor for the enzyme in this species is believed to be ubiquinone. Couples the redox reaction to proton translocation (for every two electrons transferred, four hydrogen ions are translocated across the cytoplasmic membrane), and thus conserves the redox energy in a proton gradient. This is NADH-quinone oxidoreductase subunit B from Caulobacter vibrioides (strain ATCC 19089 / CIP 103742 / CB 15) (Caulobacter crescentus).